A 610-amino-acid chain; its full sequence is Elongation factor 4 (610 aa).

Positions 13 to 195 (SHIRNFSIVA…AIVHKLPAPK (183 aa)) constitute a tr-type G domain. Residues 25-30 (DHGKST) and 142-145 (NKID) each bind GTP.

It belongs to the TRAFAC class translation factor GTPase superfamily. Classic translation factor GTPase family. LepA subfamily.

The protein resides in the cell inner membrane. It carries out the reaction GTP + H2O = GDP + phosphate + H(+). In terms of biological role, required for accurate and efficient protein synthesis under certain stress conditions. May act as a fidelity factor of the translation reaction, by catalyzing a one-codon backward translocation of tRNAs on improperly translocated ribosomes. Back-translocation proceeds from a post-translocation (POST) complex to a pre-translocation (PRE) complex, thus giving elongation factor G a second chance to translocate the tRNAs correctly. Binds to ribosomes in a GTP-dependent manner. The sequence is that of Elongation factor 4 from Rhizobium etli (strain ATCC 51251 / DSM 11541 / JCM 21823 / NBRC 15573 / CFN 42).